The following is a 118-amino-acid chain: Large ribosomal subunit protein bL20 (118 aa).

It belongs to the bacterial ribosomal protein bL20 family.

In terms of biological role, binds directly to 23S ribosomal RNA and is necessary for the in vitro assembly process of the 50S ribosomal subunit. It is not involved in the protein synthesizing functions of that subunit. The polypeptide is Large ribosomal subunit protein bL20 (Lactobacillus acidophilus (strain ATCC 700396 / NCK56 / N2 / NCFM)).